A 227-amino-acid chain; its full sequence is DNA repair protein RecO (227 aa).

This sequence belongs to the RecO family.

In terms of biological role, involved in DNA repair and RecF pathway recombination. The sequence is that of DNA repair protein RecO from Pseudomonas putida (strain W619).